Here is a 129-residue protein sequence, read N- to C-terminus: Small ribosomal subunit protein uS11 (129 aa).

It belongs to the universal ribosomal protein uS11 family. In terms of assembly, part of the 30S ribosomal subunit. Interacts with proteins S7 and S18. Binds to IF-3.

Its function is as follows. Located on the platform of the 30S subunit, it bridges several disparate RNA helices of the 16S rRNA. Forms part of the Shine-Dalgarno cleft in the 70S ribosome. This chain is Small ribosomal subunit protein uS11, found in Phenylobacterium zucineum (strain HLK1).